A 175-amino-acid polypeptide reads, in one-letter code: MSILPIVTAPDDRLKQKSQPVLEFTDQTRKFMDDMLKTMYHEDGAGLAAVQVGVLKRILVIDIKDHDSVERPKDFYPLFIVNPEMIEKSEELIKSNEGCISVPGQRIEVARPESIKIRYLDYHGKSQELKANDWLARVIQHEYDHLEGKLMIDYLSNLKRDVVLRKLKKLKNNIV.

C99 and H141 together coordinate Fe cation. E142 is an active-site residue. H145 provides a ligand contact to Fe cation.

It belongs to the polypeptide deformylase family. The cofactor is Fe(2+).

The catalysed reaction is N-terminal N-formyl-L-methionyl-[peptide] + H2O = N-terminal L-methionyl-[peptide] + formate. Removes the formyl group from the N-terminal Met of newly synthesized proteins. Requires at least a dipeptide for an efficient rate of reaction. N-terminal L-methionine is a prerequisite for activity but the enzyme has broad specificity at other positions. The protein is Peptide deformylase of Rickettsia akari (strain Hartford).